Reading from the N-terminus, the 301-residue chain is GTPase Era (301 aa).

The Era-type G domain occupies 7 to 175 (YCGFIAIVGR…AAIVRKHLPE (169 aa)). The interval 15–22 (GRPNVGKS) is G1. GTP is bound at residue 15–22 (GRPNVGKS). The segment at 41-45 (QTTRH) is G2. Residues 62-65 (DTPG) are G3. GTP is bound by residues 62–66 (DTPGL) and 124–127 (NKVD). Residues 124-127 (NKVD) are G4. A G5 region spans residues 154 to 156 (ISA). The 78-residue stretch at 206 to 283 (LGAELPYSVT…HLELWVKVKS (78 aa)) folds into the KH type-2 domain.

It belongs to the TRAFAC class TrmE-Era-EngA-EngB-Septin-like GTPase superfamily. Era GTPase family. Monomer.

It is found in the cytoplasm. Its subcellular location is the cell inner membrane. Functionally, an essential GTPase that binds both GDP and GTP, with rapid nucleotide exchange. Plays a role in 16S rRNA processing and 30S ribosomal subunit biogenesis and possibly also in cell cycle regulation and energy metabolism. The polypeptide is GTPase Era (Escherichia fergusonii (strain ATCC 35469 / DSM 13698 / CCUG 18766 / IAM 14443 / JCM 21226 / LMG 7866 / NBRC 102419 / NCTC 12128 / CDC 0568-73)).